Consider the following 354-residue polypeptide: UDP-3-O-acylglucosamine N-acyltransferase (354 aa).

Histidine 245 functions as the Proton acceptor in the catalytic mechanism.

It belongs to the transferase hexapeptide repeat family. LpxD subfamily. Homotrimer.

It catalyses the reaction a UDP-3-O-[(3R)-3-hydroxyacyl]-alpha-D-glucosamine + a (3R)-hydroxyacyl-[ACP] = a UDP-2-N,3-O-bis[(3R)-3-hydroxyacyl]-alpha-D-glucosamine + holo-[ACP] + H(+). It participates in bacterial outer membrane biogenesis; LPS lipid A biosynthesis. In terms of biological role, catalyzes the N-acylation of UDP-3-O-acylglucosamine using 3-hydroxyacyl-ACP as the acyl donor. Is involved in the biosynthesis of lipid A, a phosphorylated glycolipid that anchors the lipopolysaccharide to the outer membrane of the cell. This chain is UDP-3-O-acylglucosamine N-acyltransferase, found in Anaeromyxobacter dehalogenans (strain 2CP-C).